Here is a 675-residue protein sequence, read N- to C-terminus: Envelope glycoprotein (675 aa).

An N-terminal signal peptide occupies residues 1 to 34 (MACSTLPKSPKDKIDPRDLLIPLILFLSLKGARS). Residues 35–270 (AAPGSSPHQV…RYQNLGPRVP (236 aa)) are receptor-binding domain (RBD). The Extracellular portion of the chain corresponds to 35-620 (AAPGSSPHQV…FNRSPWFTTL (586 aa)). N-linked (GlcNAc...) asparagine; by host glycosylation occurs at Asn46. Cystine bridges form between Cys80–Cys132, Cys106–Cys121, Cys107–Cys117, Cys155–Cys175, and Cys167–Cys180. His89 lines the Zn(2+) pocket. Asp120 is a Zn(2+) binding site. The N-linked (GlcNAc...) asparagine; by host glycan is linked to Asn202. Residues Cys212 and Cys218 are joined by a disulfide bond. Residues 276–323 (VLADQLSLPRPNPLPKPAKSPPASNSTPTLISPSPTPTQPPPAGTGDR) are disordered. Positions 285-295 (RPNPLPKPAKS) are enriched in pro residues. Residues 296–308 (PPASNSTPTLISP) are compositionally biased toward low complexity. The span at 309-318 (SPTPTQPPPA) shows a compositional bias: pro residues. The N-linked (GlcNAc...) asparagine; by host glycan is linked to Asn336. Cystine bridges form between Cys346-Cys349, Cys346-Cys573, Cys376-Cys430, Cys395-Cys407, Cys437-Cys450, and Cys565-Cys572. Residues 346–349 (CWLC) carry the CXXC motif. N-linked (GlcNAc...) asparagine; by host glycosylation is found at Asn368 and Asn375. 2 N-linked (GlcNAc...) asparagine; by host glycosylation sites follow: Asn408 and Asn444. Residues 482-502 (VSLTLALLLGGLTMGGIAAGV) form a fusion peptide region. The stretch at 513–547 (QQFQQLHAAVQDDLKEVEKSITNLEKSLTSLSEVV) forms a coiled coil. The tract at residues 548 to 564 (LQNRRGLDLLFLKEGGL) is immunosuppression. The CX6CC signature appears at 565–573 (CAALKEECC). Residues 621 to 641 (ISTIMGPLIILLLILLFGPCI) traverse the membrane as a helical segment. Residue Cys640 is the site of S-palmitoyl cysteine; by host attachment. The Cytoplasmic segment spans residues 642–675 (LNRLVQFVKDRISVVQALVLTQQYHQLKPLEYEP). A YXXL motif; contains endocytosis signal motif is present at residues 665-668 (YHQL).

In terms of assembly, the mature envelope protein (Env) consists of a trimer of SU-TM heterodimers attached by a labile interchain disulfide bond. In terms of processing, specific enzymatic cleavages in vivo yield mature proteins. Envelope glycoproteins are synthesized as an inactive precursor that is N-glycosylated and processed likely by host cell furin or by a furin-like protease in the Golgi to yield the mature SU and TM proteins. The cleavage site between SU and TM requires the minimal sequence [KR]-X-[KR]-R. The R-peptide is released from the C-terminus of the cytoplasmic tail of the TM protein upon particle formation as a result of proteolytic cleavage by the viral protease. Cleavage of this peptide is required for TM to become fusogenic. Post-translationally, the CXXC motif is highly conserved across a broad range of retroviral envelope proteins. It is thought to participate in the formation of a labile disulfide bond possibly with the CX6CC motif present in the transmembrane protein. Isomerization of the intersubunit disulfide bond to an SU intrachain disulfide bond is thought to occur upon receptor recognition in order to allow membrane fusion. The transmembrane protein is palmitoylated. In terms of processing, the R-peptide is palmitoylated.

The protein localises to the virion membrane. It is found in the host cell membrane. Functionally, the surface protein (SU) attaches the virus to the host cell by binding to its receptor. This interaction triggers the refolding of the transmembrane protein (TM) and is thought to activate its fusogenic potential by unmasking its fusion peptide. Fusion occurs at the host cell plasma membrane. Its function is as follows. The transmembrane protein (TM) acts as a class I viral fusion protein. Under the current model, the protein has at least 3 conformational states: pre-fusion native state, pre-hairpin intermediate state, and post-fusion hairpin state. During viral and target cell membrane fusion, the coiled coil regions (heptad repeats) assume a trimer-of-hairpins structure, positioning the fusion peptide in close proximity to the C-terminal region of the ectodomain. The formation of this structure appears to drive apposition and subsequent fusion of viral and target cell membranes. Membranes fusion leads to delivery of the nucleocapsid into the cytoplasm. The polypeptide is Envelope glycoprotein (env) (Mus musculus (Mouse)).